The primary structure comprises 83 residues: MSGNTGERPFADIITSIRYWVIHSITIPSLFIAGWLFVSTGLAYDVFGSPRPNEYFTENRQEVPLITGRFNSLEQIDEFTKSF.

Residues 21–35 (VIHSITIPSLFIAGW) form a helical membrane-spanning segment. His-23 contacts heme.

It belongs to the PsbE/PsbF family. As to quaternary structure, heterodimer of an alpha subunit and a beta subunit. PSII is composed of 1 copy each of membrane proteins PsbA, PsbB, PsbC, PsbD, PsbE, PsbF, PsbH, PsbI, PsbJ, PsbK, PsbL, PsbM, PsbT, PsbX, PsbY, PsbZ, Psb30/Ycf12, at least 3 peripheral proteins of the oxygen-evolving complex and a large number of cofactors. It forms dimeric complexes. Requires heme b as cofactor.

The protein resides in the plastid. Its subcellular location is the chloroplast thylakoid membrane. This b-type cytochrome is tightly associated with the reaction center of photosystem II (PSII). PSII is a light-driven water:plastoquinone oxidoreductase that uses light energy to abstract electrons from H(2)O, generating O(2) and a proton gradient subsequently used for ATP formation. It consists of a core antenna complex that captures photons, and an electron transfer chain that converts photonic excitation into a charge separation. The protein is Cytochrome b559 subunit alpha of Marchantia polymorpha (Common liverwort).